A 216-amino-acid polypeptide reads, in one-letter code: Ribosomal RNA small subunit methyltransferase G (216 aa).

S-adenosyl-L-methionine contacts are provided by residues Gly82, Leu87, 135 to 136, and Arg148; that span reads AE.

The protein belongs to the methyltransferase superfamily. RNA methyltransferase RsmG family.

It localises to the cytoplasm. The catalysed reaction is guanosine(527) in 16S rRNA + S-adenosyl-L-methionine = N(7)-methylguanosine(527) in 16S rRNA + S-adenosyl-L-homocysteine. Its function is as follows. Specifically methylates the N7 position of guanine in position 527 of 16S rRNA. In Caulobacter vibrioides (strain ATCC 19089 / CIP 103742 / CB 15) (Caulobacter crescentus), this protein is Ribosomal RNA small subunit methyltransferase G.